The chain runs to 130 residues: Small ribosomal subunit protein uS8 (130 aa).

The protein belongs to the universal ribosomal protein uS8 family. Part of the 30S ribosomal subunit. Contacts proteins S5 and S12.

Functionally, one of the primary rRNA binding proteins, it binds directly to 16S rRNA central domain where it helps coordinate assembly of the platform of the 30S subunit. This is Small ribosomal subunit protein uS8 from Stutzerimonas stutzeri (strain A1501) (Pseudomonas stutzeri).